Here is a 130-residue protein sequence, read N- to C-terminus: Small ribosomal subunit protein uS8 (130 aa).

This sequence belongs to the universal ribosomal protein uS8 family. In terms of assembly, part of the 30S ribosomal subunit.

One of the primary rRNA binding proteins, it binds directly to 16S rRNA central domain where it helps coordinate assembly of the platform of the 30S subunit. The protein is Small ribosomal subunit protein uS8 of Haloquadratum walsbyi (strain DSM 16790 / HBSQ001).